The primary structure comprises 347 residues: Holliday junction branch migration complex subunit RuvB (347 aa).

The tract at residues 1–183 is large ATPase domain (RuvB-L); it reads MSEERFVSGH…FGVVLQLQFY (183 aa). ATP contacts are provided by residues Leu-22, Arg-23, Gly-64, Lys-67, Thr-68, Thr-69, 130–132, Arg-173, Tyr-183, and Arg-220; that span reads EDF. Residue Thr-68 coordinates Mg(2+). A small ATPAse domain (RuvB-S) region spans residues 184-254; the sequence is SEEELTRILM…VADAGLRMMG (71 aa). The tract at residues 257 to 347 is head domain (RuvB-H); the sequence is AMGLDTVDHK…PEGPVQPRLF (91 aa). 2 residues coordinate DNA: Arg-312 and Arg-317.

Belongs to the RuvB family. Homohexamer. Forms an RuvA(8)-RuvB(12)-Holliday junction (HJ) complex. HJ DNA is sandwiched between 2 RuvA tetramers; dsDNA enters through RuvA and exits via RuvB. An RuvB hexamer assembles on each DNA strand where it exits the tetramer. Each RuvB hexamer is contacted by two RuvA subunits (via domain III) on 2 adjacent RuvB subunits; this complex drives branch migration. In the full resolvosome a probable DNA-RuvA(4)-RuvB(12)-RuvC(2) complex forms which resolves the HJ.

It localises to the cytoplasm. It carries out the reaction ATP + H2O = ADP + phosphate + H(+). In terms of biological role, the RuvA-RuvB-RuvC complex processes Holliday junction (HJ) DNA during genetic recombination and DNA repair, while the RuvA-RuvB complex plays an important role in the rescue of blocked DNA replication forks via replication fork reversal (RFR). RuvA specifically binds to HJ cruciform DNA, conferring on it an open structure. The RuvB hexamer acts as an ATP-dependent pump, pulling dsDNA into and through the RuvAB complex. RuvB forms 2 homohexamers on either side of HJ DNA bound by 1 or 2 RuvA tetramers; 4 subunits per hexamer contact DNA at a time. Coordinated motions by a converter formed by DNA-disengaged RuvB subunits stimulates ATP hydrolysis and nucleotide exchange. Immobilization of the converter enables RuvB to convert the ATP-contained energy into a lever motion, pulling 2 nucleotides of DNA out of the RuvA tetramer per ATP hydrolyzed, thus driving DNA branch migration. The RuvB motors rotate together with the DNA substrate, which together with the progressing nucleotide cycle form the mechanistic basis for DNA recombination by continuous HJ branch migration. Branch migration allows RuvC to scan DNA until it finds its consensus sequence, where it cleaves and resolves cruciform DNA. This Symbiobacterium thermophilum (strain DSM 24528 / JCM 14929 / IAM 14863 / T) protein is Holliday junction branch migration complex subunit RuvB.